Consider the following 555-residue polypeptide: Developmental and secondary metabolism regulator veA (555 aa).

Disordered regions lie at residues 1-23 (MATR…RITR), 39-60 (ERAR…VDPP), and 234-533 (RRRG…TLLS). Residues 13 to 23 (ETEHSVSRITR) are compositionally biased toward basic and acidic residues. Residues 25–228 (GKRITYKLNV…AEQGCRVRIR (204 aa)) form the Velvet domain. Residues 39-44 (ERARAC) carry the Nuclear localization signal motif. Positions 239 to 258 (KRSDDYDFDEERSHRGRIPD) are enriched in basic and acidic residues. Positions 311 to 331 (AIPPAPAPAPPSSSTPTPVAP) are enriched in pro residues. Polar residues-rich tracts occupy residues 336–372 (RSSS…TQVY) and 380–389 (HARNPSTSTE). Residues 439–479 (QTPSNAAPSLPPIASISAEYSNNLPQPPSNLAPSPNREPRG) are PEST. Basic and acidic residues-rich tracts occupy residues 492-503 (RPHEDAFSHSER) and 519-533 (ADRR…TLLS).

Belongs to the velvet family. VeA subfamily. In terms of assembly, component of the heterotrimeric velvet complex composed of laeA, veA and velB; VeA acting as a bridging protein between laeA and velB.

The protein resides in the nucleus. The protein localises to the cytoplasm. Functionally, component of the velvet transcription factor complex that controls sexual/asexual developmental ratio in response to light, promoting sexual development in the darkness while stimulating asexual sporulation under illumination. The velvet complex hat acts as a global regulator for secondary metabolite gene expression. Increases spore dispersing capacity by impacting conidiophore architecture. The protein is Developmental and secondary metabolism regulator veA of Aspergillus niger (strain ATCC 1015 / CBS 113.46 / FGSC A1144 / LSHB Ac4 / NCTC 3858a / NRRL 328 / USDA 3528.7).